Reading from the N-terminus, the 729-residue chain is Fatty acid oxidation complex subunit alpha (729 aa).

The tract at residues 1–189 (MLYKGDTLYL…KIGLVDGVVK (189 aa)) is enoyl-CoA hydratase/isomerase. Asp-296 is a binding site for substrate. Positions 311–729 (ETPKQAAVLG…ARPVGDLKTA (419 aa)) are 3-hydroxyacyl-CoA dehydrogenase. NAD(+) is bound by residues Met-324, Asp-343, 400–402 (IVE), Lys-407, and Ser-429. The active-site For 3-hydroxyacyl-CoA dehydrogenase activity is His-450. Residue Asn-453 coordinates NAD(+). The substrate site is built by Asn-500 and Tyr-660. Residues 708 to 729 (RHNEPYYPPVEPARPVGDLKTA) form a disordered region.

This sequence in the N-terminal section; belongs to the enoyl-CoA hydratase/isomerase family. In the C-terminal section; belongs to the 3-hydroxyacyl-CoA dehydrogenase family. In terms of assembly, heterotetramer of two alpha chains (FadB) and two beta chains (FadA).

The enzyme catalyses a (3S)-3-hydroxyacyl-CoA + NAD(+) = a 3-oxoacyl-CoA + NADH + H(+). The catalysed reaction is a (3S)-3-hydroxyacyl-CoA = a (2E)-enoyl-CoA + H2O. It carries out the reaction a 4-saturated-(3S)-3-hydroxyacyl-CoA = a (3E)-enoyl-CoA + H2O. It catalyses the reaction (3S)-3-hydroxybutanoyl-CoA = (3R)-3-hydroxybutanoyl-CoA. The enzyme catalyses a (3Z)-enoyl-CoA = a 4-saturated (2E)-enoyl-CoA. The catalysed reaction is a (3E)-enoyl-CoA = a 4-saturated (2E)-enoyl-CoA. Its pathway is lipid metabolism; fatty acid beta-oxidation. In terms of biological role, involved in the aerobic and anaerobic degradation of long-chain fatty acids via beta-oxidation cycle. Catalyzes the formation of 3-oxoacyl-CoA from enoyl-CoA via L-3-hydroxyacyl-CoA. It can also use D-3-hydroxyacyl-CoA and cis-3-enoyl-CoA as substrate. The chain is Fatty acid oxidation complex subunit alpha from Escherichia coli O157:H7.